The chain runs to 420 residues: Histidine--tRNA ligase (420 aa).

It belongs to the class-II aminoacyl-tRNA synthetase family. In terms of assembly, homodimer.

The protein localises to the cytoplasm. The catalysed reaction is tRNA(His) + L-histidine + ATP = L-histidyl-tRNA(His) + AMP + diphosphate + H(+). The sequence is that of Histidine--tRNA ligase from Thermotoga sp. (strain RQ2).